A 416-amino-acid polypeptide reads, in one-letter code: uncharacterized protein (416 aa).

The N-acetyltransferase domain maps to 3 to 150 (LDVRTITPSE…SVYRAGLDAR (148 aa)). Residues 83–85 (VTV) and 91–96 (RRGLLS) each bind acetyl-CoA. Catalysis depends on tyrosine 124, which acts as the Proton donor. Catalysis depends on phenylalanine 416, which acts as the Proton acceptor; via carboxylate.

This sequence belongs to the acetyltransferase Eis family. As to quaternary structure, homohexamer; trimer of dimers.

This is an uncharacterized protein from Streptomyces griseus subsp. griseus (strain JCM 4626 / CBS 651.72 / NBRC 13350 / KCC S-0626 / ISP 5235).